The primary structure comprises 437 residues: ATP-dependent RNA helicase RhlB (437 aa).

Positions 9–37 (QKFADLGLEPTVLEGLDAQGFHYCTPIQA) match the Q motif motif. Residues 40–219 (LPVVLTGQDI…FEHMNSPESV (180 aa)) enclose the Helicase ATP-binding domain. Residue 53–60 (AQTGTGKT) participates in ATP binding. Positions 165-168 (DEAD) match the DEAD box motif. The Helicase C-terminal domain maps to 245-390 (RLLQTLIEEE…LSKYNSEALL (146 aa)). The segment at 395 to 437 (APLRLQRTPRQGGNRRPNGNRQGQGQSRPRNNNRRHPQSQKQQ) is disordered. Residues 400–424 (QRTPRQGGNRRPNGNRQGQGQSRPR) are compositionally biased toward low complexity. Positions 425–437 (NNNRRHPQSQKQQ) are enriched in basic residues.

This sequence belongs to the DEAD box helicase family. RhlB subfamily. In terms of assembly, component of the RNA degradosome, which is a multiprotein complex involved in RNA processing and mRNA degradation.

The protein localises to the cytoplasm. It carries out the reaction ATP + H2O = ADP + phosphate + H(+). In terms of biological role, DEAD-box RNA helicase involved in RNA degradation. Has RNA-dependent ATPase activity and unwinds double-stranded RNA. The chain is ATP-dependent RNA helicase RhlB from Photobacterium profundum (strain SS9).